Consider the following 480-residue polypeptide: Probable glycosyltransferase At5g25310 (480 aa).

The Cytoplasmic portion of the chain corresponds to 1 to 10 (MDKFQSKFTR). A helical; Signal-anchor for type II membrane protein transmembrane segment spans residues 11–31 (FGFISICFGSIALVLLISHCS). Residues 32–480 (TSFFDYSFQK…WLRRLNLKLT (449 aa)) lie on the Lumenal side of the membrane. Residues Asn-85, Asn-120, Asn-243, Asn-271, and Asn-281 are each glycosylated (N-linked (GlcNAc...) asparagine).

This sequence belongs to the glycosyltransferase 47 family.

The protein localises to the golgi apparatus membrane. In terms of biological role, may be involved in cell wall biosynthesis. This chain is Probable glycosyltransferase At5g25310, found in Arabidopsis thaliana (Mouse-ear cress).